Here is a 516-residue protein sequence, read N- to C-terminus: Methionine--tRNA ligase (516 aa).

The short motif at 14 to 24 (SYPNGKPHIGH) is the 'HIGH' region element. The 'KMSKS' region signature appears at 302–306 (KMSKS). Lysine 305 contacts ATP.

It belongs to the class-I aminoacyl-tRNA synthetase family. MetG type 2B subfamily. In terms of assembly, monomer.

Its subcellular location is the cytoplasm. The catalysed reaction is tRNA(Met) + L-methionine + ATP = L-methionyl-tRNA(Met) + AMP + diphosphate. In terms of biological role, is required not only for elongation of protein synthesis but also for the initiation of all mRNA translation through initiator tRNA(fMet) aminoacylation. This is Methionine--tRNA ligase from Rhizobium meliloti (strain 1021) (Ensifer meliloti).